The following is a 329-amino-acid chain: Ribosomal protein L11 methyltransferase (329 aa).

S-adenosyl-L-methionine is bound by residues T177, G198, D220, and N264.

It belongs to the methyltransferase superfamily. PrmA family.

The protein localises to the cytoplasm. It catalyses the reaction L-lysyl-[protein] + 3 S-adenosyl-L-methionine = N(6),N(6),N(6)-trimethyl-L-lysyl-[protein] + 3 S-adenosyl-L-homocysteine + 3 H(+). In terms of biological role, methylates ribosomal protein L11. The chain is Ribosomal protein L11 methyltransferase from Helicobacter pylori (strain J99 / ATCC 700824) (Campylobacter pylori J99).